Consider the following 574-residue polypeptide: Proline--tRNA ligase (574 aa).

It belongs to the class-II aminoacyl-tRNA synthetase family. ProS type 1 subfamily. In terms of assembly, homodimer.

Its subcellular location is the cytoplasm. It catalyses the reaction tRNA(Pro) + L-proline + ATP = L-prolyl-tRNA(Pro) + AMP + diphosphate. In terms of biological role, catalyzes the attachment of proline to tRNA(Pro) in a two-step reaction: proline is first activated by ATP to form Pro-AMP and then transferred to the acceptor end of tRNA(Pro). As ProRS can inadvertently accommodate and process non-cognate amino acids such as alanine and cysteine, to avoid such errors it has two additional distinct editing activities against alanine. One activity is designated as 'pretransfer' editing and involves the tRNA(Pro)-independent hydrolysis of activated Ala-AMP. The other activity is designated 'posttransfer' editing and involves deacylation of mischarged Ala-tRNA(Pro). The misacylated Cys-tRNA(Pro) is not edited by ProRS. In Anaeromyxobacter sp. (strain K), this protein is Proline--tRNA ligase.